A 169-amino-acid polypeptide reads, in one-letter code: Ribosome maturation factor RimP (169 aa).

It belongs to the RimP family.

Its subcellular location is the cytoplasm. Required for maturation of 30S ribosomal subunits. In Pseudomonas putida (strain ATCC 700007 / DSM 6899 / JCM 31910 / BCRC 17059 / LMG 24140 / F1), this protein is Ribosome maturation factor RimP.